Consider the following 250-residue polypeptide: Proteasome subunit alpha type-4-1 (250 aa).

Belongs to the peptidase T1A family. As to quaternary structure, the 26S proteasome consists of a 20S proteasome core and two 19S regulatory subunits. The 20S proteasome core is composed of 28 subunits that are arranged in four stacked rings, resulting in a barrel-shaped structure. The two end rings are each formed by seven alpha subunits, and the two central rings are each formed by seven beta subunits. The catalytic chamber with the active sites is on the inside of the barrel.

The protein localises to the cytoplasm. Its subcellular location is the nucleus. The proteasome is a multicatalytic proteinase complex which is characterized by its ability to cleave peptides with Arg, Phe, Tyr, Leu, and Glu adjacent to the leaving group at neutral or slightly basic pH. The proteasome has an ATP-dependent proteolytic activity. This chain is Proteasome subunit alpha type-4-1, found in Oryza sativa subsp. indica (Rice).